A 122-amino-acid chain; its full sequence is Large ribosomal subunit protein uL14 (122 aa).

Belongs to the universal ribosomal protein uL14 family. As to quaternary structure, part of the 50S ribosomal subunit. Forms a cluster with proteins L3 and L19. In the 70S ribosome, L14 and L19 interact and together make contacts with the 16S rRNA in bridges B5 and B8.

Binds to 23S rRNA. Forms part of two intersubunit bridges in the 70S ribosome. The protein is Large ribosomal subunit protein uL14 of Campylobacter lari (strain RM2100 / D67 / ATCC BAA-1060).